The sequence spans 543 residues: CTP synthase (543 aa).

Positions 1–265 are amidoligase domain; the sequence is MARYIFITGG…DDEVLAAFAI (265 aa). Serine 13 lines the CTP pocket. Serine 13 serves as a coordination point for UTP. 14 to 19 contacts ATP; that stretch reads SLGKGL. Tyrosine 54 serves as a coordination point for L-glutamine. Residue aspartate 71 participates in ATP binding. The Mg(2+) site is built by aspartate 71 and glutamate 139. Residues 146-148, 186-191, and lysine 222 each bind CTP; these read DIE and KTKPTQ. Residues 186-191 and lysine 222 each bind UTP; that span reads KTKPTQ. 238-240 serves as a coordination point for ATP; the sequence is RDA. Positions 291–542 constitute a Glutamine amidotransferase type-1 domain; that stretch reads TIAIVGKYTG…IEAALVRSRL (252 aa). Glycine 353 provides a ligand contact to L-glutamine. Cysteine 380 acts as the Nucleophile; for glutamine hydrolysis in catalysis. L-glutamine-binding positions include 381-384, glutamate 404, and arginine 470; that span reads FGMQ. Catalysis depends on residues histidine 515 and glutamate 517.

It belongs to the CTP synthase family. Homotetramer.

It catalyses the reaction UTP + L-glutamine + ATP + H2O = CTP + L-glutamate + ADP + phosphate + 2 H(+). It carries out the reaction L-glutamine + H2O = L-glutamate + NH4(+). The enzyme catalyses UTP + NH4(+) + ATP = CTP + ADP + phosphate + 2 H(+). The protein operates within pyrimidine metabolism; CTP biosynthesis via de novo pathway; CTP from UDP: step 2/2. Allosterically activated by GTP, when glutamine is the substrate; GTP has no effect on the reaction when ammonia is the substrate. The allosteric effector GTP functions by stabilizing the protein conformation that binds the tetrahedral intermediate(s) formed during glutamine hydrolysis. Inhibited by the product CTP, via allosteric rather than competitive inhibition. Functionally, catalyzes the ATP-dependent amination of UTP to CTP with either L-glutamine or ammonia as the source of nitrogen. Regulates intracellular CTP levels through interactions with the four ribonucleotide triphosphates. The sequence is that of CTP synthase from Rhodopseudomonas palustris (strain BisB5).